The primary structure comprises 1309 residues: Lysine-specific demethylase 2B (1309 aa).

S26 carries the phosphoserine modification. Residues 147–315 form the JmjC domain; that stretch reads FSHTKLEHLV…MQLRIYEIED (169 aa). T208 is a substrate binding site. Fe cation-binding residues include H211 and D213. A substrate-binding site is contributed by K228. H283 contributes to the Fe cation binding site. Residues 378 to 403 are compositionally biased toward acidic residues; sequence DMEEESCEQQPQEEEEEEEDKEEEGD. Positions 378–476 are disordered; the sequence is DMEEESCEQQ…PTGSPATEVS (99 aa). Positions 404–413 are enriched in basic and acidic residues; that stretch reads GADKTPKPPT. The segment covering 415 to 424 has biased composition (low complexity); the sequence is DPTSPTSTPP. Phosphoserine is present on residues S447 and S450. T466 carries the post-translational modification Phosphothreonine. Polar residues predominate over residues 467–476; sequence PTGSPATEVS. At S470 the chain carries Phosphoserine. A CXXC-type zinc finger spans residues 579–625; that stretch reads ARRRRTRCRKCEACLRTECGECHFCKDMKKFGGPGRMKQSCIMRQCI. Zn(2+) contacts are provided by C586, C589, C592, C597, C600, C603, C619, C624, C635, C638, C661, C664, H669, C672, C692, and C695. The segment at 632–698 adopts a PHD-type zinc-finger fold; sequence TAVCLVCGEA…CWECPKCNHA (67 aa). 2 disordered regions span residues 700–816 and 828–1005; these read KTGK…SLSP and QLKP…SASP. Basic and acidic residues predominate over residues 722 to 772; sequence KEQKMNRDNKEGQEPAKRRSECEEAPRRRSDEHPKKVPADGILRRKSDDVH. The segment covering 792 to 816 has biased composition (low complexity); it reads SSLQTSPGSSSHLSPRPPLGSSLSP. Residues K830 and K863 each participate in a glycyl lysine isopeptide (Lys-Gly) (interchain with G-Cter in SUMO2) cross-link. Positions 883 to 892 are enriched in polar residues; that stretch reads SRSSSPTAGP. The span at 905–914 shows a compositional bias: basic residues; that stretch reads KVKMRRKRRL. Residues 915–933 are compositionally biased toward basic and acidic residues; it reads VNKELSKELSKELNHEIQK. Residues 916-944 adopt a coiled-coil conformation; that stretch reads NKELSKELSKELNHEIQKTESTLAHESQQ. S924 is subject to Phosphoserine. Over residues 934-946 the composition is skewed to polar residues; it reads TESTLAHESQQPI. 2 positions are modified to phosphoserine: S948 and S952. The segment covering 955–968 has biased composition (basic and acidic residues); it reads DEPKRPLSHCERPH. Residues S991 and S1004 each carry the phosphoserine modification. The region spanning 1032-1078 is the F-box domain; the sequence is DGAAHVMHREVWMAVFSYLSHRDLCVCMRVCRTWNRWCCDKRLWTRI. 6 LRR repeats span residues 1106–1127, 1129–1155, 1195–1220, 1221–1250, 1251–1275, and 1276–1309; these read WTNI…LRDL, LSGC…DVQW, GLDI…QLSY, CNHI…NLSD, CNKV…DLRY, and CKQV…QKLS.

The protein belongs to the JHDM1 histone demethylase family. Interacts with SKP1, forming heterodimers. The KDM2B-SKP1 heterodimeric complex interacts with the PCGF1-BCORL heterodimeric complex to form a homotetrameric polycomb repression complex 1 (PRC1.1). Directly interacts with CUL1. The SKP1-KDM2B interacts with UBB. Fe(2+) is required as a cofactor.

It is found in the nucleus. It localises to the nucleolus. The protein resides in the chromosome. It carries out the reaction N(6),N(6)-dimethyl-L-lysyl(36)-[histone H3] + 2 2-oxoglutarate + 2 O2 = L-lysyl(36)-[histone H3] + 2 formaldehyde + 2 succinate + 2 CO2. With respect to regulation, histone demethylase activity is inhibited by fumarate. Histone demethylase that demethylates 'Lys-4' and 'Lys-36' of histone H3, thereby playing a central role in histone code. Preferentially demethylates trimethylated H3 'Lys-4' and dimethylated H3 'Lys-36' residue while it has weak or no activity for mono- and tri-methylated H3 'Lys-36'. Preferentially binds the transcribed region of ribosomal RNA and represses the transcription of ribosomal RNA genes which inhibits cell growth and proliferation. May also serve as a substrate-recognition component of the SCF (SKP1-CUL1-F-box protein)-type E3 ubiquitin ligase complex. The polypeptide is Lysine-specific demethylase 2B (Kdm2b) (Mus musculus (Mouse)).